The following is an 891-amino-acid chain: Valine--tRNA ligase (891 aa).

Residues 43 to 53 (PFTSGTLHLGH) carry the 'HIGH' region motif. Positions 536–540 (KMSKS) match the 'KMSKS' region motif. Lysine 539 serves as a coordination point for ATP.

The protein belongs to the class-I aminoacyl-tRNA synthetase family. ValS type 2 subfamily.

The protein resides in the cytoplasm. The enzyme catalyses tRNA(Val) + L-valine + ATP = L-valyl-tRNA(Val) + AMP + diphosphate. Its function is as follows. Catalyzes the attachment of valine to tRNA(Val). As ValRS can inadvertently accommodate and process structurally similar amino acids such as threonine, to avoid such errors, it has a 'posttransfer' editing activity that hydrolyzes mischarged Thr-tRNA(Val) in a tRNA-dependent manner. The chain is Valine--tRNA ligase from Pyrococcus horikoshii (strain ATCC 700860 / DSM 12428 / JCM 9974 / NBRC 100139 / OT-3).